A 349-amino-acid chain; its full sequence is UPF0283 membrane protein Ent638_2153 (349 aa).

The next 3 membrane-spanning stretches (helical) occupy residues 70–90, 99–119, and 213–233; these read MVTAGLTLFGISVVGQGVQWT, WVALGGCAAGALIIGAGVGSV, and ESTLMIAVSPLALVDMAFIAW.

Belongs to the UPF0283 family.

It is found in the cell inner membrane. In Enterobacter sp. (strain 638), this protein is UPF0283 membrane protein Ent638_2153.